Here is a 426-residue protein sequence, read N- to C-terminus: Glutamyl-tRNA reductase (426 aa).

Substrate contacts are provided by residues 50 to 53 (TCNR), Ser108, 113 to 115 (EPQ), and Gln119. Cys51 acts as the Nucleophile in catalysis. Position 188–193 (188–193 (GAGEMI)) interacts with NADP(+).

This sequence belongs to the glutamyl-tRNA reductase family. In terms of assembly, homodimer.

It catalyses the reaction (S)-4-amino-5-oxopentanoate + tRNA(Glu) + NADP(+) = L-glutamyl-tRNA(Glu) + NADPH + H(+). Its pathway is porphyrin-containing compound metabolism; protoporphyrin-IX biosynthesis; 5-aminolevulinate from L-glutamyl-tRNA(Glu): step 1/2. Catalyzes the NADPH-dependent reduction of glutamyl-tRNA(Glu) to glutamate 1-semialdehyde (GSA). The polypeptide is Glutamyl-tRNA reductase (Polaromonas sp. (strain JS666 / ATCC BAA-500)).